Consider the following 141-residue polypeptide: Large ribosomal subunit protein uL16 (141 aa).

This sequence belongs to the universal ribosomal protein uL16 family. As to quaternary structure, part of the 50S ribosomal subunit.

In terms of biological role, binds 23S rRNA and is also seen to make contacts with the A and possibly P site tRNAs. This is Large ribosomal subunit protein uL16 from Thermus thermophilus (strain ATCC BAA-163 / DSM 7039 / HB27).